The chain runs to 419 residues: CinA-like protein (419 aa).

It belongs to the CinA family.

This chain is CinA-like protein, found in Synechococcus sp. (strain CC9902).